The chain runs to 566 residues: Glucose starvation modulator protein 1 (566 aa).

A DNA-binding region (zn(2)-C6 fungal-type) is located at residues 20–48 (CVFCHQKHLQCSNERPCKNCVKRNIAHGC). 2 disordered regions span residues 63-92 (GVPG…SPMD) and 250-270 (KQAS…NTLS). Over residues 253–270 (SPSPSNTSTSENNTNTLS) the composition is skewed to low complexity.

This sequence belongs to the ERT1/acuK family.

The protein resides in the nucleus. Transcription factor which regulates nonfermentable carbon utilization. This Candida albicans (strain WO-1) (Yeast) protein is Glucose starvation modulator protein 1 (GSM1).